A 268-amino-acid chain; its full sequence is Tryptophan synthase alpha chain (268 aa).

Residues E47 and D58 each act as proton acceptor in the active site.

Belongs to the TrpA family. Tetramer of two alpha and two beta chains.

The catalysed reaction is (1S,2R)-1-C-(indol-3-yl)glycerol 3-phosphate + L-serine = D-glyceraldehyde 3-phosphate + L-tryptophan + H2O. Its pathway is amino-acid biosynthesis; L-tryptophan biosynthesis; L-tryptophan from chorismate: step 5/5. In terms of biological role, the alpha subunit is responsible for the aldol cleavage of indoleglycerol phosphate to indole and glyceraldehyde 3-phosphate. This is Tryptophan synthase alpha chain from Chlorobium phaeobacteroides (strain BS1).